Consider the following 943-residue polypeptide: MTQRSIAGPICNLKFVTLLVALSSELPFLGAGVQLQDNGYNGLLIAINPQVPENQNLISNIKEMITEASFYLFNATKRRVFFRNIKILIPATWKANNNSKIKQESYEKANVIVTDWYGAHGDDPYTLQYRGCGKEGKYIHFTPNFLLNDNLTAGYGSRGRVFVHEWAHLRWGVFDEYNNDKPFYINGQNQIKVTRCSSDITGIFVCEKGPCPQENCIISKLFKEGCTFIYNSTQNATASIMFMQSLSSVVEFCNASTHNQEAPNLQNQMCSLRSAWDVITDSADFHHSFPMNGTELPPPPTFSLVQAGDKVVCLVLDVSSKMAEADRLLQLQQAAEFYLMQIVEIHTFVGIASFDSKGEIRAQLHQINSNDDRKLLVSYLPTTVSAKTDISICSGLKKGFEVVEKLNGKAYGSVMILVTSGDDKLLGNCLPTVLSSGSTIHSIALGSSAAPNLEELSRLTGGLKFFVPDISNSNSMIDAFSRISSGTGDIFQQHIQLESTGENVKPHHQLKNTVTVDNTVGNDTMFLVTWQASGPPEIILFDPDGRKYYTNNFITNLTFRTASLWIPGTAKPGHWTYTLNNTHHSLQALKVTVTSRASNSAVPPATVEAFVERDSLHFPHPVMIYANVKQGFYPILNATVTATVEPETGDPVTLRLLDDGAGADVIKNDGIYSRYFFSFAANGRYSLKVHVNHSPSISTPAHSIPGSHAMYVPGYTANGNIQMNAPRKSVGRNEEERKWGFSRVSSGGSFSVLGVPAGPHPDVFPPCKIIDLEAVKVEEELTLSWTAPGEDFDQGQATSYEIRMSKSLQNIQDDFNNAILVNTSKRNPQQAGIREIFTFSPQISTNGPEHQPNGETHESHRIYVAIRAMDRNSLQSAVSNIAQAPLFIPPNSDPVPARDYLILKGVLTAMGLIGIICLIIVVTHHTLSRKKRADKKENGTKLL.

An N-terminal signal peptide occupies residues 1-31; the sequence is MTQRSIAGPICNLKFVTLLVALSSELPFLGA. The Extracellular portion of the chain corresponds to 32 to 901; sequence GVQLQDNGYN…SDPVPARDYL (870 aa). Residues 54-205 are metalloprotease domain; the sequence is NQNLISNIKE…CSSDITGIFV (152 aa). Residues N74 and N150 are each glycosylated (N-linked (GlcNAc...) asparagine). Residue H164 coordinates Zn(2+). E165 is an active-site residue. Residues H168 and D175 each contribute to the Zn(2+) site. N-linked (GlcNAc...) asparagine glycosylation is present at N231. The 173-residue stretch at 311-483 folds into the VWFA domain; it reads VVCLVLDVSS…NSMIDAFSRI (173 aa). N522 and N822 each carry an N-linked (GlcNAc...) asparagine glycan. A helical membrane pass occupies residues 902–922; that stretch reads ILKGVLTAMGLIGIICLIIVV. The Cytoplasmic segment spans residues 923 to 943; it reads THHTLSRKKRADKKENGTKLL.

It belongs to the CLCR family. The 141 kDa mature form is autoproteolytically cleaved by the metalloprotease domain, producing a 109 kDa form and a 35 kDa form. The cleavage is necessary for calcium-activated chloride channel (CaCC) activation activity. In terms of processing, N-glycosylated. Expressed in cornea, skin, vagina, esophagus, and larynx (at protein level). Expressed in trachea and mammary gland. Weakly expressed in testis and kidney. Highly expressed in corneal epithelium, colon and trachea. Moderately expressed in brain, urogenital organs, bladder, uterus and prostate. Highly expressed in tissues containing stratified epithelium including cornea, esophagus, larynx, skin and vagina than those tissues which contain only epithelial monolayers. Expressed in normal breast epithelium but not in breast cancer. Highly expressed during epithelial stratification. Expressed in endothelial cells of lung. Expressed selectively in endothelia of small pulmonary arteries, arterioles, and subpleural and interlobular venules.

It localises to the cell membrane. The protein resides in the basal cell membrane. Its subcellular location is the cell junction. It is found in the secreted. Plays a role in modulating chloride current across the plasma membrane in a calcium-dependent manner, and cell adhesion. Involved in basal cell adhesion and/or stratification of squamous epithelia. May act as a tumor suppressor in breast and colorectal cancer. Plays a key role for cell adhesion in the beginning stages of lung metastasis via the binding to ITGB4. The chain is Calcium-activated chloride channel regulator 2 (CLCA2) from Homo sapiens (Human).